The following is a 283-amino-acid chain: (+)-borneol dehydrogenase 2 (283 aa).

NAD(+) contacts are provided by residues 27-33, aspartate 51, 76-77, and 103-105; these read GGSSGIG, DV, and NAG. The Proton donor role is filled by serine 157. Residues tyrosine 170, lysine 174, and threonine 205 each coordinate NAD(+). Residue tyrosine 170 is the Proton acceptor of the active site. The Proton donor/acceptor role is filled by lysine 174.

The protein belongs to the short-chain dehydrogenases/reductases (SDR) family.

It carries out the reaction (1R,2S,4R)-borneol + NAD(+) = (1R,4R)-camphor + NADH + H(+). In terms of biological role, involved in the biosynthesis of monoterpene natural products related to camphor. Catalayzes the oxidation of (+)-borneol to (+)-camphor. Shows absolute selectivity towards (+)-borneol. Catalyzes the oxidation of (+)-isoborneol to (-)-camphor. Shows absolute selectivity towards (+)-isoborneol. This chain is (+)-borneol dehydrogenase 2, found in Salvia officinalis (Sage).